A 152-amino-acid chain; its full sequence is RxLR effector protein Avrblb1 (152 aa).

Residues 1-24 form the signal peptide; it reads MRSLLLTVLLNLVVLLATTGAVSS. The short motif at 51–72 is the RxLR-dEER element; that stretch reads RSLRGDYNNEVTKEPNTSDEER. Residues 54-56 carry the RGD RLK-binding motif motif; the sequence is RGD. Residue Asn-66 is glycosylated (N-linked (GlcNAc...) asparagine). Positions 99–152 are w motif; that stretch reads QSKTVLRYEDKLFTALYKSGETPRSLRTKHLDKASASVFFNRFKKWYDKNVGPS.

The protein belongs to the RxLR effector family. As to quaternary structure, interacts with host defense protein RGA2/Rpi-blb1. Interacts with host legume-type lectin receptor kinase LECRK19.

It is found in the secreted. Its subcellular location is the host nucleus. The protein resides in the host nucleolus. The protein localises to the host cell membrane. Its function is as follows. Secreted effector that acts as an elicitor of hypersensitive response (HR) specifically on plants carrying defense protein RGA2/Rpi-blb1. Enhances P.infestans colonization of plant hosts Nicotiana benthamiana and potato Solanum bulbocastanum leaves. Associates with host legume-type lectin receptor kinases and disrupts attachments between the host plasma membrane and cell wall. This is RxLR effector protein Avrblb1 from Phytophthora infestans (strain T30-4) (Potato late blight agent).